The following is a 616-amino-acid chain: Dihydroxy-acid dehydratase (616 aa).

Position 81 (D81) interacts with Mg(2+). C122 is a binding site for [2Fe-2S] cluster. The Mg(2+) site is built by D123 and K124. Position 124 is an N6-carboxylysine (K124). C195 is a [2Fe-2S] cluster binding site. E491 serves as a coordination point for Mg(2+). The active-site Proton acceptor is the S517.

This sequence belongs to the IlvD/Edd family. As to quaternary structure, homodimer. The cofactor is [2Fe-2S] cluster. Mg(2+) serves as cofactor.

It carries out the reaction (2R)-2,3-dihydroxy-3-methylbutanoate = 3-methyl-2-oxobutanoate + H2O. The catalysed reaction is (2R,3R)-2,3-dihydroxy-3-methylpentanoate = (S)-3-methyl-2-oxopentanoate + H2O. It functions in the pathway amino-acid biosynthesis; L-isoleucine biosynthesis; L-isoleucine from 2-oxobutanoate: step 3/4. It participates in amino-acid biosynthesis; L-valine biosynthesis; L-valine from pyruvate: step 3/4. In terms of biological role, functions in the biosynthesis of branched-chain amino acids. Catalyzes the dehydration of (2R,3R)-2,3-dihydroxy-3-methylpentanoate (2,3-dihydroxy-3-methylvalerate) into 2-oxo-3-methylpentanoate (2-oxo-3-methylvalerate) and of (2R)-2,3-dihydroxy-3-methylbutanoate (2,3-dihydroxyisovalerate) into 2-oxo-3-methylbutanoate (2-oxoisovalerate), the penultimate precursor to L-isoleucine and L-valine, respectively. This chain is Dihydroxy-acid dehydratase, found in Escherichia coli (strain K12 / MC4100 / BW2952).